The chain runs to 237 residues: Cytidylate kinase (237 aa).

ATP is bound at residue 15-23; it reads GPSGSGKGT.

Belongs to the cytidylate kinase family. Type 1 subfamily.

The protein resides in the cytoplasm. It carries out the reaction CMP + ATP = CDP + ADP. The catalysed reaction is dCMP + ATP = dCDP + ADP. The sequence is that of Cytidylate kinase from Coxiella burnetii (strain RSA 493 / Nine Mile phase I).